The primary structure comprises 101 residues: Apolipoprotein C-II (101 aa).

Residues 1–22 (MGARHLLALLLVLLVLGFEVQG) form the signal peptide. The segment at 66-74 (TMDEKIRDM) is lipid binding. The interval 78 to 101 (STAAVSTYVGIFTDQLLSLLKGED) is lipoprotein lipase cofactor.

It belongs to the apolipoprotein C2 family. In terms of processing, proapolipoprotein C-II is synthesized as a sialic acid containing glycoprotein which is subsequently desialylated prior to its proteolytic processing. Post-translationally, proapolipoprotein C-II, the major form found in plasma undergoes proteolytic cleavage of its N-terminal hexapeptide to generate apolipoprotein C-II, which occurs as the minor form in plasma.

Its subcellular location is the secreted. Its function is as follows. Component of chylomicrons, very low-density lipoproteins (VLDL), low-density lipoproteins (LDL), and high-density lipoproteins (HDL) in plasma. Plays an important role in lipoprotein metabolism as an activator of lipoprotein lipase. Both proapolipoprotein C-II and apolipoprotein C-II can activate lipoprotein lipase. This Tapirus terrestris (Lowland tapir) protein is Apolipoprotein C-II (APOC2).